Consider the following 813-residue polypeptide: Protein tramtrack, alpha isoform (813 aa).

The region spanning threonine 33–glutamine 98 is the BTB domain. Disordered stretches follow at residues glutamate 118–glutamine 148, alanine 171–glutamate 324, threonine 356–lysine 428, and alanine 526–glutamine 585. A compositionally biased stretch (low complexity) spans serine 125 to proline 145. Residues threonine 176–serine 187 show a composition bias toward polar residues. The segment covering proline 192–lysine 201 has biased composition (basic residues). Residues serine 203, serine 205, and serine 206 each carry the phosphoserine modification. Position 209 is a phosphothreonine (threonine 209). Residues histidine 254–asparagine 285 show a composition bias toward basic and acidic residues. Composition is skewed to polar residues over residues leucine 302 to glutamate 324, threonine 356 to lysine 369, and alanine 377 to lysine 388. Basic residues predominate over residues serine 560 to alanine 578. C2H2-type zinc fingers lie at residues tyrosine 610–histidine 638 and phenylalanine 646–histidine 669. Serine 682 is subject to Phosphoserine.

As to quaternary structure, interacts with CoRest/CG33525, suggesting that it acts by recruiting a CoRest-containing corepressor complex. Interacts with phyl.

The protein localises to the nucleus. Functionally, binds to a number of sites in the transcriptional regulatory region of ftz. Isoform alpha is required to repress genes that promote the R7 cell fate. Probable repressor of the transcription of the segmentation genes ftz, eve, h, odd, run, and en. May bind to the region 5'-AGGG[CT]GG-3'. Degradation of ttk is directed by binding of sinah or sina, via the adapter molecule phyl which binds to the BTB domain of ttk. The polypeptide is Protein tramtrack, alpha isoform (ttk) (Drosophila melanogaster (Fruit fly)).